Consider the following 192-residue polypeptide: Ion-translocating oxidoreductase complex subunit B (192 aa).

The segment at 1 to 26 (MNAIWIAVAAVSLLGLAFGAILGYAS) is hydrophobic. In terms of domain architecture, 4Fe-4S spans 32–91 (EDDPVVEKIDEILPQSQCGQCGYPGCRPYAEAISCNGEKINRCAPGGEAVMLKIAELLNV). [4Fe-4S] cluster is bound by residues Cys49, Cys52, Cys57, Cys74, Cys117, Cys120, Cys123, Cys127, Cys147, Cys150, Cys153, and Cys157. 2 consecutive 4Fe-4S ferredoxin-type domains span residues 108-137 (MVAVIDENNCIGCTKCIQACPVDAIVGATR) and 138-167 (VMHTVMSDLCTGCNLCVDPCPTHCISLQPV).

This sequence belongs to the 4Fe4S bacterial-type ferredoxin family. RnfB subfamily. As to quaternary structure, the complex is composed of six subunits: RsxA, RsxB, RsxC, RsxD, RsxE and RsxG. [4Fe-4S] cluster is required as a cofactor.

Its subcellular location is the cell inner membrane. In terms of biological role, part of a membrane-bound complex that couples electron transfer with translocation of ions across the membrane. Required to maintain the reduced state of SoxR. This is Ion-translocating oxidoreductase complex subunit B from Shigella boydii serotype 4 (strain Sb227).